A 102-amino-acid polypeptide reads, in one-letter code: MYAIIATGGKQYKVAEGDIIKVEKLGVEAGATVSFDQVLVLNNGQVVVGNPTVAGASVSATVVEEGKNKKVIVYRYKRKSGYHKKNGHRQSYTKVKIDKINA.

It belongs to the bacterial ribosomal protein bL21 family. In terms of assembly, part of the 50S ribosomal subunit. Contacts protein L20.

Its function is as follows. This protein binds to 23S rRNA in the presence of protein L20. This Lachnoclostridium phytofermentans (strain ATCC 700394 / DSM 18823 / ISDg) (Clostridium phytofermentans) protein is Large ribosomal subunit protein bL21.